The chain runs to 346 residues: GTPase Obg (346 aa).

One can recognise an Obg domain in the interval 1–159; the sequence is MRFVDEVTFV…RELRLELQLL (159 aa). The tract at residues 128–148 is disordered; it reads LHFKSSTNRAPRQSTEGTAGE. The segment covering 130–144 has biased composition (polar residues); that stretch reads FKSSTNRAPRQSTEG. The region spanning 160–335 is the OBG-type G domain; the sequence is ADVGLLGMPN…LCGDIMNDLE (176 aa). Residues 166-173, 191-195, 213-216, 285-288, and 316-318 each bind GTP; these read GMPNVGKS, FTTLY, DIPG, NRLD, and SGL. Mg(2+)-binding residues include serine 173 and threonine 193.

Belongs to the TRAFAC class OBG-HflX-like GTPase superfamily. OBG GTPase family. Monomer. Requires Mg(2+) as cofactor.

It is found in the cytoplasm. An essential GTPase which binds GTP, GDP and possibly (p)ppGpp with moderate affinity, with high nucleotide exchange rates and a fairly low GTP hydrolysis rate. Plays a role in control of the cell cycle, stress response, ribosome biogenesis and in those bacteria that undergo differentiation, in morphogenesis control. This chain is GTPase Obg, found in Halorhodospira halophila (strain DSM 244 / SL1) (Ectothiorhodospira halophila (strain DSM 244 / SL1)).